The chain runs to 134 residues: Small ribosomal subunit protein uS8c (134 aa).

Belongs to the universal ribosomal protein uS8 family. In terms of assembly, part of the 30S ribosomal subunit.

The protein localises to the plastid. The protein resides in the chloroplast. One of the primary rRNA binding proteins, it binds directly to 16S rRNA central domain where it helps coordinate assembly of the platform of the 30S subunit. The chain is Small ribosomal subunit protein uS8c (rps8) from Pelargonium hortorum (Common geranium).